Reading from the N-terminus, the 319-residue chain is Transcription initiation factor IIB 6 (319 aa).

The span at 1–16 (MTDARMRSREQERTDE) shows a compositional bias: basic and acidic residues. The interval 1-33 (MTDARMRSREQERTDETESESTDGCPECGGLVV) is disordered. Residues 21-51 (STDGCPECGGLVVNDEEHGESVCADCGLVVE) form a TFIIB-type zinc finger. Cysteine 25, cysteine 28, cysteine 43, and cysteine 46 together coordinate Zn(2+). A compositionally biased stretch (basic and acidic residues) spans 59-74 (PEWRAFDSKEKDEKSR). The interval 59-89 (PEWRAFDSKEKDEKSRVGAPTTNTMHDKGLS) is disordered. 2 consecutive repeat copies span residues 137–220 (GEID…VREL) and 231–312 (SYVP…ELLE).

The protein belongs to the TFIIB family.

In terms of biological role, stabilizes TBP binding to an archaeal box-A promoter. Also responsible for recruiting RNA polymerase II to the pre-initiation complex (DNA-TBP-TFIIB). This Halobacterium salinarum (strain ATCC 700922 / JCM 11081 / NRC-1) (Halobacterium halobium) protein is Transcription initiation factor IIB 6.